The sequence spans 311 residues: MTGDVRRLPDGHAAPALNPLTGIKLVVLTGLSGAGRSTAAKCLEDLGWFVVDNLPPGLLDTMVDLGVRSGGAINKIAAVVDVRSRAFTSDLYGALGVLRNRGTALRIVFLEASDDELIRRFENVRRPHPLQGDGRLADGIARERELLRDVRGVADLVIDTTNLNVHELRGKIIAAFSDDNQPALRATVVSFGYKYGLPADADLVVDCRFLPNPHWVDELRPLTGRDDAVREYVLAQPGAQDFLDTYSKVLGTVVDGYLREGKRYLTLAVGCTGGKHRSVVIAEELAERLRRLATAESRIDVQVAHRDLGRE.

An ATP-binding site is contributed by 30–37 (GLSGAGRS). 81–84 (DVRS) is a GTP binding site.

It belongs to the RapZ-like family.

Its function is as follows. Displays ATPase and GTPase activities. This Acidothermus cellulolyticus (strain ATCC 43068 / DSM 8971 / 11B) protein is Nucleotide-binding protein Acel_1111.